Here is a 351-residue protein sequence, read N- to C-terminus: Phosphate acyltransferase (351 aa).

It belongs to the PlsX family. In terms of assembly, homodimer. Probably interacts with PlsY.

The protein localises to the cytoplasm. The catalysed reaction is a fatty acyl-[ACP] + phosphate = an acyl phosphate + holo-[ACP]. Its pathway is lipid metabolism; phospholipid metabolism. Functionally, catalyzes the reversible formation of acyl-phosphate (acyl-PO(4)) from acyl-[acyl-carrier-protein] (acyl-ACP). This enzyme utilizes acyl-ACP as fatty acyl donor, but not acyl-CoA. In Maricaulis maris (strain MCS10) (Caulobacter maris), this protein is Phosphate acyltransferase.